The chain runs to 273 residues: Putative peptidyl-prolyl cis-trans isomerase Cbf2 (273 aa).

An N-terminal signal peptide occupies residues Met1 to Ala21. Residues Pro131–Asn228 enclose the PpiC domain.

The enzyme catalyses [protein]-peptidylproline (omega=180) = [protein]-peptidylproline (omega=0). The protein is Putative peptidyl-prolyl cis-trans isomerase Cbf2 (cbf2) of Campylobacter jejuni subsp. jejuni serotype O:2 (strain ATCC 700819 / NCTC 11168).